Consider the following 421-residue polypeptide: MAYYLNSEAHLDPGPIYVRENGQLHMVSLALDGVKNSLQKPRPFRLFPKGFSVELCMNREDDTAQKEKTDHFIFTYTREGNLRYSAKSLFSLVLGFISDNVDHIDSLIGFPEQIAEKLFSAAEARQKFTEPGAGLRALQKFTEAYGSLVLCSLCLRNRYLVVAEKLEEIKSFRELTRLDLSCCWLGDEHELLEHLTNEALSSVTQLHLKDNCLSDAGIRKMTAPVRVLKRGLENLTLLDLSCNPEITDAGIGYLFSFRKLNCLDISGTGLKDIKAVKDKLRTHIGLVHSKVPLKEFDHSNCKTEGWADQIVLQWERVSVEAVRQRKDPEPRKAAQYFYQKRALTEASRKCPLAETHMNSSGKLQFYREKAPDCHEPLLSQESKKSKKRAFEESEQEQSSPQSAKQKCVCLAVEDWDLLNSY.

LRR repeat units follow at residues 149-170, 174-195, 202-222, 234-255, and 259-280; these read VLCSLCLRNRYLVVAEKLEEIK, ELTRLDLSCCWLGDEHELLEHL, SVTQLHLKDNCLSDAGIRKMT, NLTLLDLSCNPEITDAGIGYLF, and KLNCLDISGTGLKDIKAVKDKL. Residues 374–406 are disordered; it reads HEPLLSQESKKSKKRAFEESEQEQSSPQSAKQK. At serine 399 the chain carries Phosphoserine.

Belongs to the LRRC42 family.

This is Leucine-rich repeat-containing protein 42 (Lrrc42) from Rattus norvegicus (Rat).